Here is a 72-residue protein sequence, read N- to C-terminus: Translation initiation factor IF-1 (72 aa).

One can recognise an S1-like domain in the interval 1 to 72 (MAKEEAIEIE…SKGRITYRYK (72 aa)).

It belongs to the IF-1 family. In terms of assembly, component of the 30S ribosomal translation pre-initiation complex which assembles on the 30S ribosome in the order IF-2 and IF-3, IF-1 and N-formylmethionyl-tRNA(fMet); mRNA recruitment can occur at any time during PIC assembly.

It is found in the cytoplasm. In terms of biological role, one of the essential components for the initiation of protein synthesis. Stabilizes the binding of IF-2 and IF-3 on the 30S subunit to which N-formylmethionyl-tRNA(fMet) subsequently binds. Helps modulate mRNA selection, yielding the 30S pre-initiation complex (PIC). Upon addition of the 50S ribosomal subunit IF-1, IF-2 and IF-3 are released leaving the mature 70S translation initiation complex. The chain is Translation initiation factor IF-1 from Chlorobium luteolum (strain DSM 273 / BCRC 81028 / 2530) (Pelodictyon luteolum).